Reading from the N-terminus, the 671-residue chain is UvrABC system protein C (671 aa).

The region spanning 16-95 is the GIY-YIG domain; it reads TTPGVYRFRD…IKEFKPRFNV (80 aa). Residues 207-242 enclose the UVR domain; it reads KRFISRLEKDMAAAVAELDYERAAGLRDDIIALRKV.

The protein belongs to the UvrC family. As to quaternary structure, interacts with UvrB in an incision complex.

The protein localises to the cytoplasm. In terms of biological role, the UvrABC repair system catalyzes the recognition and processing of DNA lesions. UvrC both incises the 5' and 3' sides of the lesion. The N-terminal half is responsible for the 3' incision and the C-terminal half is responsible for the 5' incision. The chain is UvrABC system protein C from Paenarthrobacter aurescens (strain TC1).